Reading from the N-terminus, the 606-residue chain is V-type proton ATPase catalytic subunit A (606 aa).

239-246 provides a ligand contact to ATP; sequence GAFGCGKT.

This sequence belongs to the ATPase alpha/beta chains family. V-ATPase is a heteromultimeric enzyme made up of two complexes: the ATP-hydrolytic V1 complex and the proton translocation V0 complex. The V1 complex consists of three catalytic AB heterodimers that form a heterohexamer, three peripheral stalks each consisting of EG heterodimers, one central rotor including subunits D and F, and the regulatory subunits C and H. The proton translocation complex V0 consists of the proton transport subunit a, a ring of proteolipid subunits c9c'', rotary subunit d, subunits e and f, and the accessory subunits vah-19/Ac45 and vah-20/PRR.

It carries out the reaction ATP + H2O + 4 H(+)(in) = ADP + phosphate + 5 H(+)(out). Functionally, catalytic subunit of the V1 complex of vacuolar(H+)-ATPase (V-ATPase), a multisubunit enzyme composed of a peripheral complex (V1) that hydrolyzes ATP and a membrane integral complex (V0) that translocates protons. V-ATPase is responsible for acidifying and maintaining the pH of intracellular compartments and in some cell types, is targeted to the plasma membrane, where it is responsible for acidifying the extracellular environment. Required along with other vacuolar ATPase components for the removal of protein aggregates which form in immature oocytes in the distal gonad. This removal occurs as the oocytes mature and move to the proximal gonad, is triggered by the introduction of sperm through mating and occurs before fertilization. The introduction of sperm triggers V-ATPase accumulation in proximal oocytes and induces lysosomal acidification which leads to engulfing of protein aggregates by lysosomes and subsequent clearance of the aggregates. Lysosomal acidification also leads to changes in mitochondrial morphology and function. Mitochondria in distal immature oocytes are fragmented, produce high levels of reactive oxygen species (ROS) and have high membrane potential, indicative of metabolic inactivity. In contrast, mitochondria in proximal mature oocytes are tubular with lower ROS levels and membrane potential, indicative of an active metabolic state required for aggregate mobilization before clearance. Involved in receptor-mediated endocytosis. This Caenorhabditis briggsae protein is V-type proton ATPase catalytic subunit A.